Here is a 251-residue protein sequence, read N- to C-terminus: uncharacterized protein (251 aa).

This is an uncharacterized protein from Mycoplasma genitalium (strain ATCC 33530 / DSM 19775 / NCTC 10195 / G37) (Mycoplasmoides genitalium).